The sequence spans 341 residues: Protein pelota homolog (341 aa).

It belongs to the eukaryotic release factor 1 family. Pelota subfamily. In terms of assembly, monomer. It depends on a divalent metal cation as a cofactor.

It localises to the cytoplasm. Its function is as follows. May function in recognizing stalled ribosomes, interact with stem-loop structures in stalled mRNA molecules, and effect endonucleolytic cleavage of the mRNA. May play a role in the release non-functional ribosomes and degradation of damaged mRNAs. Has endoribonuclease activity. The sequence is that of Protein pelota homolog from Metallosphaera sedula (strain ATCC 51363 / DSM 5348 / JCM 9185 / NBRC 15509 / TH2).